We begin with the raw amino-acid sequence, 317 residues long: Probable cell division protein WhiA (317 aa).

Positions 276–310 (TLKELGEMVSGGKISKSGINHRLRKIDDIAEKLRA) form a DNA-binding region, H-T-H motif.

It belongs to the WhiA family.

In terms of biological role, involved in cell division and chromosome segregation. This chain is Probable cell division protein WhiA, found in Bacillus thuringiensis (strain Al Hakam).